The following is a 1134-amino-acid chain: DENN domain-containing protein 2B (1134 aa).

Polar residues predominate over residues 1–13; sequence MTMTANKNSSITH. The interval 1–90 is disordered; sequence MTMTANKNSS…DPSPETSPPI (90 aa). Residues S30 and S32 each carry the phosphoserine modification. Positions 32–43 are enriched in pro residues; the sequence is SPPPVLYPPRSP. T228 is subject to Phosphothreonine. S230 bears the Phosphoserine mark. 2 disordered regions span residues 233–273 and 289–571; these read SYPE…GIRK and LKEQ…KRHS. A compositionally biased stretch (basic and acidic residues) spans 249-259; that stretch reads SLYRLEKRPGR. Over residues 315–348 the composition is skewed to low complexity; the sequence is GTLGTLEEPTGTASVSPSSRAGGVAGVAGEAGPP. At T361 the chain carries Phosphothreonine. S365 is modified (phosphoserine). The segment covering 370 to 385 has biased composition (pro residues); the sequence is LLPPKSSPDPAVNPVP. The span at 389–399 shows a compositional bias: basic and acidic residues; the sequence is RTFEYEADKNP. Residues 406-428 are compositionally biased toward pro residues; it reads GLPPSPTPAAPPPLPSTPAPPVT. Positions 429-443 are enriched in basic residues; it reads RRPKKDMRGHRKSQN. Residues 453–478 are compositionally biased toward polar residues; that stretch reads SSLQSLYPSSPTENGTESQPKFGSKS. Residue T479 is modified to Phosphothreonine. Composition is skewed to polar residues over residues 511–521 and 542–555; these read KSQQLSENSLD and SLKSNSQSLRSGNW. S542 carries the post-translational modification Phosphoserine. The span at 559-570 shows a compositional bias: basic residues; that stretch reads KSHRLPRLPKRH. Residues S571 and S619 each carry the phosphoserine modification. The disordered stretch occupies residues 633 to 658; that stretch reads LSMSSLETASLRDENSESESDSDDRF. A uDENN domain is found at 695–843; it reads EYFVVVSLKK…PFPAPGKTIK (149 aa). The 134-residue stretch at 865 to 998 folds into the cDENN domain; it reads RLEHVDFECL…LQAALEQALE (134 aa). A dDENN domain is found at 1000 to 1093; it reads KSELISQDSD…QDRELRKCRA (94 aa).

As to quaternary structure, interacts with ITSN1 and GRB2. Isoform 1 interacts with the SH3 domain of ABL1. Phosphorylated. Phosphorylation decreases ITSN1 binding.

It localises to the cytoplasm. Its subcellular location is the cell cortex. It is found in the cell membrane. The protein resides in the recycling endosome. May be involved in cytoskeletal organization and tumorogenicity. Seems to be involved in a signaling transduction pathway leading to activation of MAPK1/ERK2. Plays a role in EGFR trafficking from recycling endosomes back to the cell membrane. In terms of biological role, guanine nucleotide exchange factor (GEF) which may activate RAB9A and RAB9B. Promotes the exchange of GDP to GTP, converting inactive GDP-bound Rab proteins into their active GTP-bound form. Its function is as follows. May block ERK2 activation stimulated by ABL1. May alter cell morphology and cell growth. This is DENN domain-containing protein 2B (Dennd2b) from Mus musculus (Mouse).